The primary structure comprises 668 residues: Protein ENTREP3 (668 aa).

3 consecutive transmembrane segments (helical) span residues 34-54, 67-87, and 91-111; these read LLTL…FSMV, SCPS…IVSW, and FTLV…LSMA. The N-linked (GlcNAc...) asparagine glycan is linked to asparagine 160. The helical transmembrane segment at 174–194 threads the bilayer; sequence LFSVCGLTICAAIICTLSAIV. Phosphoserine is present on residues serine 358 and serine 389. 3 disordered regions span residues 386-419, 442-503, and 550-570; these read FEES…PTAA, RVPR…SSDT, and SAEK…SGPA. Over residues 398–407 the composition is skewed to low complexity; the sequence is AARSYSCSAP. Serine 493 carries the phosphoserine modification. Serine 574 carries the post-translational modification Phosphoserine. Disordered stretches follow at residues 597 to 620 and 645 to 668; these read KAPD…WGRP and GRRL…ETGL. Over residues 655–668 the composition is skewed to polar residues; the sequence is HSLSLNGGSRETGL.

The protein belongs to the ENTREP family. As to quaternary structure, may interact with WWOX. As to expression, widely expressed.

The protein resides in the membrane. This chain is Protein ENTREP3, found in Homo sapiens (Human).